A 138-amino-acid chain; its full sequence is Putative protein encoded by LINC02912 (138 aa).

2 helical membrane-spanning segments follow: residues 32–52 and 65–85; these read FALSFLIGKMGIIILSVCLIC and CLINVSFSLYSCFIVFVTISQ. A disordered region spans residues 109 to 138; sequence SGGQSQHSWPCPERSKNLPQVSKQLRNRAG.

Its subcellular location is the membrane. The protein is Putative protein encoded by LINC02912 of Homo sapiens (Human).